The chain runs to 106 residues: UPF0060 membrane protein Bphy_5052 (106 aa).

A run of 4 helical transmembrane segments spans residues 4 to 24, 30 to 50, 58 to 78, and 82 to 102; these read LLLYVVTAVAEIVGCYLPWRW, SVWLLLPGALSLALFAWLLTF, VYAAYGGVYVAVAILWLWCVD, and PSAWDLAGVALTLAGMSIIAF.

This sequence belongs to the UPF0060 family.

The protein resides in the cell inner membrane. The chain is UPF0060 membrane protein Bphy_5052 from Paraburkholderia phymatum (strain DSM 17167 / CIP 108236 / LMG 21445 / STM815) (Burkholderia phymatum).